We begin with the raw amino-acid sequence, 211 residues long: ATP phosphoribosyltransferase (211 aa).

This sequence belongs to the ATP phosphoribosyltransferase family. Short subfamily. As to quaternary structure, heteromultimer composed of HisG and HisZ subunits.

It is found in the cytoplasm. The enzyme catalyses 1-(5-phospho-beta-D-ribosyl)-ATP + diphosphate = 5-phospho-alpha-D-ribose 1-diphosphate + ATP. Its pathway is amino-acid biosynthesis; L-histidine biosynthesis; L-histidine from 5-phospho-alpha-D-ribose 1-diphosphate: step 1/9. Its function is as follows. Catalyzes the condensation of ATP and 5-phosphoribose 1-diphosphate to form N'-(5'-phosphoribosyl)-ATP (PR-ATP). Has a crucial role in the pathway because the rate of histidine biosynthesis seems to be controlled primarily by regulation of HisG enzymatic activity. The polypeptide is ATP phosphoribosyltransferase (Bacillus cereus (strain G9842)).